The chain runs to 232 residues: Cytidylate kinase (232 aa).

15–23 serves as a coordination point for ATP; the sequence is GPAGAGKST. The tract at residues 164 to 192 is disordered; the sequence is KEDPPPISQGQLAAEMKERDMRDSTRADA. A compositionally biased stretch (basic and acidic residues) spans 178–189; that stretch reads EMKERDMRDSTR.

It belongs to the cytidylate kinase family. Type 1 subfamily.

It is found in the cytoplasm. It carries out the reaction CMP + ATP = CDP + ADP. The catalysed reaction is dCMP + ATP = dCDP + ADP. This Solibacter usitatus (strain Ellin6076) protein is Cytidylate kinase.